The sequence spans 168 residues: Large ribosomal subunit protein uL29c (168 aa).

A disordered region spans residues 1-20 (MLAIHSLSSTPCSSGLTSPP). The N-terminal 58 residues, 1–58 (MLAIHSLSSTPCSSGLTSPPKSTLLTKSSFHGLRLPSVNLSSSLRLRVQTPPSSVVVM), are a transit peptide targeting the chloroplast.

As to quaternary structure, component of the chloroplast large ribosomal subunit (LSU). Mature 70S chloroplast ribosomes of higher plants consist of a small (30S) and a large (50S) subunit. The 30S small subunit contains 1 molecule of ribosomal RNA (16S rRNA) and 24 different proteins. The 50S large subunit contains 3 rRNA molecules (23S, 5S and 4.5S rRNA) and 33 different proteins.

It localises to the plastid. The protein resides in the chloroplast. Its function is as follows. Component of the chloroplast ribosome (chloro-ribosome), a dedicated translation machinery responsible for the synthesis of chloroplast genome-encoded proteins, including proteins of the transcription and translation machinery and components of the photosynthetic apparatus. The polypeptide is Large ribosomal subunit protein uL29c (RPL29) (Spinacia oleracea (Spinach)).